A 414-amino-acid chain; its full sequence is Na(+)/H(+) antiporter NhaA (414 aa).

Helical transmembrane passes span 22 to 42 (VGGFLLIGGALTALIWANSPF), 61 to 81 (LHLTVEAWVADGLLAIFFFVV), 101 to 121 (MLPIVAAVCGMAVPALIYAAF), 131 to 151 (GWGIPMATDIAFAVAILAVVG), 171 to 191 (LGAIIVIAVFYTASLSFLPLI), 215 to 235 (SAALPNWVVYLPLAGVIWALV), 239 to 259 (GVHATIAGVAMGLLMRTVPLA), 281 to 301 (VLPVFAVMSAGVVFAGGLGAV), 308 to 328 (LGIIAGLVVGKTVGIAGGSWV), 343 to 363 (WIDITGMALLAGIGFTVSLLI), and 379 to 399 (KAGVLLASLLATVLGAVVLAV).

The protein belongs to the NhaA Na(+)/H(+) (TC 2.A.33) antiporter family.

It is found in the cell membrane. It carries out the reaction Na(+)(in) + 2 H(+)(out) = Na(+)(out) + 2 H(+)(in). Functionally, na(+)/H(+) antiporter that extrudes sodium in exchange for external protons. This Thermobifida fusca (strain YX) protein is Na(+)/H(+) antiporter NhaA.